Reading from the N-terminus, the 150-residue chain is Flagellar assembly factor FliW (150 aa).

This sequence belongs to the FliW family. As to quaternary structure, interacts with translational regulator CsrA and flagellin(s).

The protein resides in the cytoplasm. Acts as an anti-CsrA protein, binds CsrA and prevents it from repressing translation of its target genes, one of which is flagellin. Binds to flagellin and participates in the assembly of the flagellum. The polypeptide is Flagellar assembly factor FliW (Caldanaerobacter subterraneus subsp. tengcongensis (strain DSM 15242 / JCM 11007 / NBRC 100824 / MB4) (Thermoanaerobacter tengcongensis)).